The primary structure comprises 238 residues: Ribonuclease PH (238 aa).

Phosphate-binding positions include arginine 86 and 124–126; that span reads GTR.

The protein belongs to the RNase PH family. In terms of assembly, homohexameric ring arranged as a trimer of dimers.

It catalyses the reaction tRNA(n+1) + phosphate = tRNA(n) + a ribonucleoside 5'-diphosphate. Its function is as follows. Phosphorolytic 3'-5' exoribonuclease that plays an important role in tRNA 3'-end maturation. Removes nucleotide residues following the 3'-CCA terminus of tRNAs; can also add nucleotides to the ends of RNA molecules by using nucleoside diphosphates as substrates, but this may not be physiologically important. Probably plays a role in initiation of 16S rRNA degradation (leading to ribosome degradation) during starvation. This chain is Ribonuclease PH, found in Vibrio vulnificus (strain CMCP6).